Consider the following 147-residue polypeptide: Large ribosomal subunit protein uL13 (147 aa).

The protein belongs to the universal ribosomal protein uL13 family. In terms of assembly, part of the 50S ribosomal subunit.

This protein is one of the early assembly proteins of the 50S ribosomal subunit, although it is not seen to bind rRNA by itself. It is important during the early stages of 50S assembly. The protein is Large ribosomal subunit protein uL13 of Mycolicibacterium smegmatis (strain ATCC 700084 / mc(2)155) (Mycobacterium smegmatis).